We begin with the raw amino-acid sequence, 335 residues long: Cobalt-precorrin-5B C(1)-methyltransferase (335 aa).

It belongs to the CbiD family.

It carries out the reaction Co-precorrin-5B + S-adenosyl-L-methionine = Co-precorrin-6A + S-adenosyl-L-homocysteine. Its pathway is cofactor biosynthesis; adenosylcobalamin biosynthesis; cob(II)yrinate a,c-diamide from sirohydrochlorin (anaerobic route): step 6/10. Catalyzes the methylation of C-1 in cobalt-precorrin-5B to form cobalt-precorrin-6A. The polypeptide is Cobalt-precorrin-5B C(1)-methyltransferase (Methanospirillum hungatei JF-1 (strain ATCC 27890 / DSM 864 / NBRC 100397 / JF-1)).